A 151-amino-acid polypeptide reads, in one-letter code: Deoxyuridine 5'-triphosphate nucleotidohydrolase (151 aa).

Substrate contacts are provided by residues 70-72 (RSG), N83, 87-89 (LID), and K97.

The protein belongs to the dUTPase family. Mg(2+) serves as cofactor.

The enzyme catalyses dUTP + H2O = dUMP + diphosphate + H(+). The protein operates within pyrimidine metabolism; dUMP biosynthesis; dUMP from dCTP (dUTP route): step 2/2. This enzyme is involved in nucleotide metabolism: it produces dUMP, the immediate precursor of thymidine nucleotides and it decreases the intracellular concentration of dUTP so that uracil cannot be incorporated into DNA. The protein is Deoxyuridine 5'-triphosphate nucleotidohydrolase of Idiomarina loihiensis (strain ATCC BAA-735 / DSM 15497 / L2-TR).